Here is a 182-residue protein sequence, read N- to C-terminus: Flagellar transcriptional regulator FlhC (182 aa).

The Zn(2+) site is built by C138, C141, C158, and C161.

Belongs to the FlhC family. In terms of assembly, heterohexamer composed of two FlhC and four FlhD subunits. Each FlhC binds a FlhD dimer, forming a heterotrimer, and a hexamer assembles by dimerization of two heterotrimers. Requires Zn(2+) as cofactor.

The protein localises to the cytoplasm. Functions in complex with FlhD as a master transcriptional regulator that regulates transcription of several flagellar and non-flagellar operons by binding to their promoter region. Activates expression of class 2 flagellar genes, including fliA, which is a flagellum-specific sigma factor that turns on the class 3 genes. Also regulates genes whose products function in a variety of physiological pathways. In Gallionella capsiferriformans (strain ES-2) (Gallionella ferruginea capsiferriformans (strain ES-2)), this protein is Flagellar transcriptional regulator FlhC.